Here is a 153-residue protein sequence, read N- to C-terminus: Small ribosomal subunit protein bS16 (153 aa).

The disordered stretch occupies residues glutamate 130 to alanine 153. Over residues alanine 140–alanine 153 the composition is skewed to acidic residues.

This sequence belongs to the bacterial ribosomal protein bS16 family.

The protein is Small ribosomal subunit protein bS16 of Bifidobacterium longum (strain NCC 2705).